A 375-amino-acid chain; its full sequence is AT-rich binding protein (375 aa).

Residues 29–52 form a C2H2-type 1 zinc finger; sequence IVCHTCQEELQTQDQFWKHIQDEH. A compositionally biased stretch (basic and acidic residues) spans 110 to 119; sequence DDQREMDIHE. Residues 110-142 form a disordered region; that stretch reads DDQREMDIHEAQQQQHQQQQQHQQQQQLQQQQQ. A compositionally biased stretch (low complexity) spans 121 to 142; that stretch reads QQQQHQQQQQHQQQQQLQQQQQ. C2H2-type zinc fingers lie at residues 308-332 and 338-361; these read YICD…RVVH and FNCE…KKKH.

Its subcellular location is the nucleus. Its function is as follows. May be a transcription factor for genes having (A+T) stretches in their promoter and/or enhancer regions. Binds to AT rich DNA. This is AT-rich binding protein from Drosophila pseudoobscura pseudoobscura (Fruit fly).